The primary structure comprises 349 residues: Microbial Terpene synthase-like protein 1 (349 aa).

Positions 98, 102, 243, and 247 each coordinate Mg(2+). Positions 98–102 (DDILD) match the DDXXD motif motif.

Belongs to the terpene synthase family. Mg(2+) is required as a cofactor.

Its pathway is secondary metabolite biosynthesis; terpenoid biosynthesis. In terms of biological role, sesquiterpene synthase converting farnesyl diphosphate to six sesquiterpenes, with beta-elemene, delta-cadinene and an unidentified oxygenated sesquiterpene as the major products. Has no diterpene synthase activity. In Selaginella moellendorffii (Spikemoss), this protein is Microbial Terpene synthase-like protein 1.